Here is a 331-residue protein sequence, read N- to C-terminus: Ketol-acid reductoisomerase (NADP(+)) (331 aa).

Residues 2-182 form the KARI N-terminal Rossmann domain; that stretch reads IKKYYDADCN…GAGRAGILET (181 aa). Residues 25-28, Arg-48, and Ser-51 contribute to the NADP(+) site; that span reads YGSQ. Residue His-108 is part of the active site. Residue Gly-134 coordinates NADP(+). One can recognise a KARI C-terminal knotted domain in the interval 183–329; the sequence is TFREETETDL…AELRKMMSWI (147 aa). 4 residues coordinate Mg(2+): Asp-191, Glu-195, Glu-227, and Glu-231. Ser-252 is a binding site for substrate.

The protein belongs to the ketol-acid reductoisomerase family. The cofactor is Mg(2+).

The catalysed reaction is (2R)-2,3-dihydroxy-3-methylbutanoate + NADP(+) = (2S)-2-acetolactate + NADPH + H(+). It carries out the reaction (2R,3R)-2,3-dihydroxy-3-methylpentanoate + NADP(+) = (S)-2-ethyl-2-hydroxy-3-oxobutanoate + NADPH + H(+). It participates in amino-acid biosynthesis; L-isoleucine biosynthesis; L-isoleucine from 2-oxobutanoate: step 2/4. The protein operates within amino-acid biosynthesis; L-valine biosynthesis; L-valine from pyruvate: step 2/4. Functionally, involved in the biosynthesis of branched-chain amino acids (BCAA). Catalyzes an alkyl-migration followed by a ketol-acid reduction of (S)-2-acetolactate (S2AL) to yield (R)-2,3-dihydroxy-isovalerate. In the isomerase reaction, S2AL is rearranged via a Mg-dependent methyl migration to produce 3-hydroxy-3-methyl-2-ketobutyrate (HMKB). In the reductase reaction, this 2-ketoacid undergoes a metal-dependent reduction by NADPH to yield (R)-2,3-dihydroxy-isovalerate. The protein is Ketol-acid reductoisomerase (NADP(+)) of Brachyspira hyodysenteriae (strain ATCC 49526 / WA1).